The following is a 475-amino-acid chain: Ankyrin repeat, SAM and basic leucine zipper domain-containing protein 1 (475 aa).

Residues serine 17, serine 18, and serine 20 each carry the phosphoserine modification. ANK repeat units follow at residues 45–74 (EKNE…SVES), 78–107 (YGWT…NASF), 110–144 (DKQT…DPNV), 148–177 (RLMT…EVNS), 181–210 (NGYT…NKML), and 214–243 (DGKT…PLEG). The SAM domain occupies 272–334 (SYTAFGDLEI…KILAALKELE (63 aa)).

As to quaternary structure, interacts with DDX4, PIWIL1, RANBP9 and TDRD1.

The protein resides in the cytoplasm. Functionally, plays a central role during spermatogenesis by repressing transposable elements and preventing their mobilization, which is essential for the germline integrity. Acts via the piRNA metabolic process, which mediates the repression of transposable elements during meiosis by forming complexes composed of piRNAs and Piwi proteins and governs the methylation and subsequent repression of transposons. Its association with pi-bodies suggests a participation in the primary piRNAs metabolic process. Required prior to the pachytene stage to facilitate the production of multiple types of piRNAs, including those associated with repeats involved in the regulation of retrotransposons. May act by mediating protein-protein interactions during germ cell maturation. The polypeptide is Ankyrin repeat, SAM and basic leucine zipper domain-containing protein 1 (ASZ1) (Mustela putorius furo (European domestic ferret)).